The following is a 423-amino-acid chain: Glucose-6-phosphate isomerase (423 aa).

The active-site Proton donor is the Glu279. Active-site residues include His300 and Lys413.

Belongs to the GPI family.

The protein localises to the cytoplasm. It catalyses the reaction alpha-D-glucose 6-phosphate = beta-D-fructose 6-phosphate. It functions in the pathway carbohydrate biosynthesis; gluconeogenesis. It participates in carbohydrate degradation; glycolysis; D-glyceraldehyde 3-phosphate and glycerone phosphate from D-glucose: step 2/4. Catalyzes the reversible isomerization of glucose-6-phosphate to fructose-6-phosphate. The polypeptide is Glucose-6-phosphate isomerase (Acholeplasma laidlawii (strain PG-8A)).